Reading from the N-terminus, the 86-residue chain is Co-chaperonin GroES (86 aa).

The protein belongs to the GroES chaperonin family. As to quaternary structure, heptamer of 7 subunits arranged in a ring. Interacts with the chaperonin GroEL.

The protein localises to the cytoplasm. In terms of biological role, together with the chaperonin GroEL, plays an essential role in assisting protein folding. The GroEL-GroES system forms a nano-cage that allows encapsulation of the non-native substrate proteins and provides a physical environment optimized to promote and accelerate protein folding. GroES binds to the apical surface of the GroEL ring, thereby capping the opening of the GroEL channel. This is Co-chaperonin GroES from Campylobacter concisus (strain 13826).